Consider the following 341-residue polypeptide: Malate dehydrogenase, mitochondrial (341 aa).

NAD(+)-binding positions include Gly35–Gly41 and Asp61. Substrate is bound by residues Arg108 and Arg114. Residues Asn121 and Ile144 to Asn146 contribute to the NAD(+) site. Substrate contacts are provided by Asn146 and Arg180. His204 serves as the catalytic Proton acceptor. An NAD(+)-binding site is contributed by Met255.

Belongs to the LDH/MDH superfamily. MDH type 1 family. In terms of assembly, homodimer.

Its subcellular location is the mitochondrion matrix. The catalysed reaction is (S)-malate + NAD(+) = oxaloacetate + NADH + H(+). Its function is as follows. Catalyzes the reversible conversion of (S)-malate to oxaloacetate in the citric acid cycle. The protein is Malate dehydrogenase, mitochondrial of Caenorhabditis elegans.